Reading from the N-terminus, the 340-residue chain is Protein-arginine kinase (340 aa).

The region spanning 14–244 is the Phosphagen kinase C-terminal domain; the sequence is IVITTRIRLA…EQIINQENLS (231 aa). ATP contacts are provided by residues 17 to 21, His-81, Arg-115, 166 to 170, and 197 to 202; these read TTRIR, RASVM, and RGLWGE.

This sequence belongs to the ATP:guanido phosphotransferase family.

It carries out the reaction L-arginyl-[protein] + ATP = N(omega)-phospho-L-arginyl-[protein] + ADP + H(+). Catalyzes the specific phosphorylation of arginine residues in proteins. This is Protein-arginine kinase from Clostridium acetobutylicum (strain ATCC 824 / DSM 792 / JCM 1419 / IAM 19013 / LMG 5710 / NBRC 13948 / NRRL B-527 / VKM B-1787 / 2291 / W).